The sequence spans 308 residues: Olfactory receptor 8D1 (308 aa).

Residues 1–25 (MTMENYSMAAQFVLDGLTQQAELQL) lie on the Extracellular side of the membrane. Asn5 carries N-linked (GlcNAc...) asparagine glycosylation. The chain crosses the membrane as a helical span at residues 26–46 (PLFLLFLGIYVVTVVGNLGMI). Residues 47-54 (LLIAVSPL) lie on the Cytoplasmic side of the membrane. Residues 55–75 (LHTPMYYFLSSLSFVDFCYSS) traverse the membrane as a helical segment. The Extracellular segment spans residues 76 to 99 (VITPKMLVNFLGKKNTILYSECMV). A disulfide bridge links Cys97 with Cys189. A helical transmembrane segment spans residues 100-120 (QLFFFVVFVVAEGYLLTAMAY). Residues 121-139 (DRYVAICSPLLYNAIMSSW) are Cytoplasmic-facing. Residues 140–160 (VCSLLVLAAFFLGFLSALTHT) form a helical membrane-spanning segment. Residues 161-197 (SAMMKLSFCKSHIINHYFCDVLPLLNLSCSNTHLNEL) lie on the Extracellular side of the membrane. A glycan (N-linked (GlcNAc...) asparagine) is linked at Asn186. The helical transmembrane segment at 198–217 (LLFIIAGFNTLVPTLAVAVS) threads the bilayer. Residues 218 to 237 (YAFILYSILHIRSSEGRSKA) are Cytoplasmic-facing. The chain crosses the membrane as a helical span at residues 238-258 (FGTCSSHLMAVVIFFGSITFM). Residues 259-271 (YFKPPSSNSLDQE) are Extracellular-facing. Residues 272-292 (KVSSVFYTTVIPMLNPLIYSL) traverse the membrane as a helical segment. Over 293–308 (RNKDVKKALRKVLVGK) the chain is Cytoplasmic.

The protein belongs to the G-protein coupled receptor 1 family. As to expression, expressed in the tongue.

It is found in the cell membrane. Functionally, odorant receptor (Potential). May be involved in taste perception. This Homo sapiens (Human) protein is Olfactory receptor 8D1 (OR8D1).